Reading from the N-terminus, the 487-residue chain is Ribosomal protein uS12 methylthiotransferase RimO (487 aa).

One can recognise an MTTase N-terminal domain in the interval 38–149 (PTVAFAHLGC…IVEVLEQVEA (112 aa)). [4Fe-4S] cluster-binding residues include C47, C83, C112, C187, C191, and C194. The region spanning 173-402 (TTSEAVAYLK…MEAQQAISAE (230 aa)) is the Radical SAM core domain. The 72-residue stretch at 405 to 476 (GAWVGRIVDV…IYDLEGEVVG (72 aa)) folds into the TRAM domain.

This sequence belongs to the methylthiotransferase family. RimO subfamily. It depends on [4Fe-4S] cluster as a cofactor.

The protein localises to the cytoplasm. The enzyme catalyses L-aspartate(89)-[ribosomal protein uS12]-hydrogen + (sulfur carrier)-SH + AH2 + 2 S-adenosyl-L-methionine = 3-methylsulfanyl-L-aspartate(89)-[ribosomal protein uS12]-hydrogen + (sulfur carrier)-H + 5'-deoxyadenosine + L-methionine + A + S-adenosyl-L-homocysteine + 2 H(+). Its function is as follows. Catalyzes the methylthiolation of an aspartic acid residue of ribosomal protein uS12. The polypeptide is Ribosomal protein uS12 methylthiotransferase RimO (Synechococcus sp. (strain RCC307)).